Here is a 128-residue protein sequence, read N- to C-terminus: Insulin-like growth factor 2 (128 aa).

The first 24 residues, 1–24, serve as a signal peptide directing secretion; sequence MGISMGKSMLVLLTFLAFASCCIA. The interval 25 to 52 is b; sequence AYRPSETLCGGELVDTLQFVCGDRGFYF. Disulfide bonds link Cys33–Cys71, Cys45–Cys84, and Cys70–Cys75. The tract at residues 53 to 64 is c; the sequence is SRPASRVSRRSR. The tract at residues 65 to 85 is a; sequence GIVEECCFRSCDLALLETYCA. The segment at 86–91 is d; that stretch reads TPAKSE. Positions 92 to 128 are cleaved as a propeptide — e peptide; that stretch reads RDVSASLAVLPDNFPRYPVGKFFQYDTWRQSTQRLRR.

Belongs to the insulin family. In terms of assembly, interacts with MYORG; this interaction is required for IGF2 secretion. Interacts with integrins ITGAV:ITGB3 and ITGA6:ITGB4; integrin-binding is required for IGF2 signaling. Post-translationally, proteolytically processed by PCSK4, proIGF2 is cleaved at Arg-128 and Arg-92 to generate big-IGF2 and mature IGF2.

The protein resides in the secreted. In terms of biological role, the insulin-like growth factors possess growth-promoting activity. Major fetal growth hormone in mammals. Plays a key role in regulating fetoplacental development. IGF2 is influenced by placental lactogen. Also involved in tissue differentiation. In adults, involved in glucose metabolism in adipose tissue, skeletal muscle and liver. Acts as a ligand for integrin which is required for IGF2 signaling. Positively regulates myogenic transcription factor MYOD1 function by facilitating the recruitment of transcriptional coactivators, thereby controlling muscle terminal differentiation. Inhibits myoblast differentiation and metabolism via increasing the mitochondrial respiration rate. Preptin undergoes glucose-mediated co-secretion with insulin, and acts as a physiological amplifier of glucose-mediated insulin secretion. Exhibits osteogenic properties by increasing osteoblast mitogenic activity through phosphoactivation of MAPK1 and MAPK3. The sequence is that of Insulin-like growth factor 2 from Cavia porcellus (Guinea pig).